We begin with the raw amino-acid sequence, 420 residues long: UDP-N-acetylglucosamine 1-carboxyvinyltransferase (420 aa).

22 to 23 (KN) is a binding site for phosphoenolpyruvate. Arginine 93 provides a ligand contact to UDP-N-acetyl-alpha-D-glucosamine. The active-site Proton donor is cysteine 117. At cysteine 117 the chain carries 2-(S-cysteinyl)pyruvic acid O-phosphothioketal. UDP-N-acetyl-alpha-D-glucosamine contacts are provided by aspartate 306 and isoleucine 328.

This sequence belongs to the EPSP synthase family. MurA subfamily.

It localises to the cytoplasm. The catalysed reaction is phosphoenolpyruvate + UDP-N-acetyl-alpha-D-glucosamine = UDP-N-acetyl-3-O-(1-carboxyvinyl)-alpha-D-glucosamine + phosphate. The protein operates within cell wall biogenesis; peptidoglycan biosynthesis. Its function is as follows. Cell wall formation. Adds enolpyruvyl to UDP-N-acetylglucosamine. This chain is UDP-N-acetylglucosamine 1-carboxyvinyltransferase, found in Colwellia psychrerythraea (strain 34H / ATCC BAA-681) (Vibrio psychroerythus).